Here is a 209-residue protein sequence, read N- to C-terminus: Eukaryotic translation initiation factor 4E (209 aa).

MRNA-binding positions include 51-52, 97-98, and 153-158; these read WH, WE, and RKQAYR.

The protein belongs to the eukaryotic initiation factor 4E family. As to quaternary structure, eIF4F is a multi-subunit complex, the composition of which varies with external and internal environmental conditions. It is composed of at least eIF4A, eIF4E and eIF4G. eIF4E is also known to interact with other partners.

In terms of biological role, recognizes and binds the 7-methylguanosine-containing mRNA cap during an early step in the initiation of protein synthesis and facilitates ribosome binding by inducing the unwinding of the mRNAs secondary structures. This is Eukaryotic translation initiation factor 4E (TIF45) from Candida albicans (strain SC5314 / ATCC MYA-2876) (Yeast).